The following is a 346-amino-acid chain: Peripherin-2 (346 aa).

Topologically, residues 1–18 are cytoplasmic; it reads MALLKVKFDQKKRVKLAQ. Residues 19 to 41 traverse the membrane as a helical segment; sequence GLWLMNWFSVLAGIIIFGLGLFL. Residues 42–62 are Lumenal-facing; it reads KIELRKRSDVMNNSESHFVPN. An N-linked (GlcNAc...) asparagine glycan is attached at asparagine 53. The chain crosses the membrane as a helical span at residues 63 to 79; sequence SLIGVGVLSCVFNSLAG. Residues 80–101 are Cytoplasmic-facing; it reads KICYDALDPAKYAKWKPWLKPY. The chain crosses the membrane as a helical span at residues 102–122; it reads LAVCVLFNVVLFLVALCCFLL. The Lumenal segment spans residues 123–264; sequence RGSLESTLAH…LSYYSNLMNT (142 aa). N-linked (GlcNAc...) asparagine glycans are attached at residues asparagine 229 and asparagine 263. A helical membrane pass occupies residues 265-283; it reads TGAVTLLVWLFEVTITVGL. Over 284 to 346 the chain is Cytoplasmic; that stretch reads RYLHTALEGM…EDAGQAPAAG (63 aa). The interaction with MREG stretch occupies residues 341-346; it reads QAPAAG.

Belongs to the PRPH2/ROM1 family. As to quaternary structure, homodimer; disulfide-linked. Forms a homotetramer. Forms a heterotetramer with ROM1. Homotetramer and heterotetramer core complexes go on to form higher order complexes by formation of intermolecular disulfide bonds. Interacts with MREG. Interacts with STX3. Interacts with SNAP25. In terms of tissue distribution, retina (photoreceptor). In rim region of ROS (rod outer segment) disks.

It localises to the membrane. The protein localises to the cell projection. Its subcellular location is the cilium. It is found in the photoreceptor outer segment. The protein resides in the photoreceptor inner segment. Essential for retina photoreceptor outer segment disk morphogenesis, may also play a role with ROM1 in the maintenance of outer segment disk structure. Required for the maintenance of retinal outer nuclear layer thickness. Required for the correct development and organization of the photoreceptor inner segment. The chain is Peripherin-2 (PRPH2) from Bos taurus (Bovine).